The primary structure comprises 463 residues: uncharacterized protein (463 aa).

This sequence belongs to the mycobacterial PPE family.

This is an uncharacterized protein from Mycobacterium tuberculosis (strain ATCC 25618 / H37Rv).